The chain runs to 396 residues: Calsequestrin-1 (396 aa).

An N-terminal signal peptide occupies residues 1–34 (MSATDRMGPRAVPGLRLALLLLLVLGTPKSGVQG). At Tyr43 the chain carries Phosphotyrosine. At Ser81 the chain carries Phosphoserine. Thr124 is subject to Phosphothreonine. Position 216 is a phosphoserine (Ser216). An N-linked (GlcNAc...) asparagine glycan is attached at Asn350.

It belongs to the calsequestrin family. As to quaternary structure, monomer; increases in response to a depletion of intracellular calcium. Homodimer. Homotetramer and homopolymer. Can form linear homooligomers. Ca(2+) ions promote oligomerization. Interacts (via C-terminal end and preferentially with the monomeric form) with STIM1; this interaction increases in response to a depletion of intracellular calcium, decreases both STIM1 aggregation and clustering, interaction of STIM1 with ORAI1 and store-operated Ca(2+) entry (SOCE) activity. Interacts with ASPH and TRDN. Post-translationally, N-glycosylated. Expressed in myoblasts (at protein level).

It localises to the endoplasmic reticulum. The protein resides in the sarcoplasmic reticulum. It is found in the sarcoplasmic reticulum lumen. The protein localises to the sarcoplasmic reticulum membrane. Its subcellular location is the mitochondrion matrix. Its function is as follows. Calsequestrin is a high-capacity, moderate affinity, calcium-binding protein and thus acts as an internal calcium store in muscle. Calcium ions are bound by clusters of acidic residues at the protein surface, often at the interface between subunits. Can bind around 80 Ca(2+) ions. Regulates the release of lumenal Ca(2+) via the calcium release channel RYR1; this plays an important role in triggering muscle contraction. Negatively regulates store-operated Ca(2+) entry (SOCE) activity. This is Calsequestrin-1 (CASQ1) from Homo sapiens (Human).